We begin with the raw amino-acid sequence, 401 residues long: O-methyltransferase mfmE (401 aa).

S-adenosyl-L-methionine is bound by residues 243–244 and aspartate 268; that span reads GG. Residue histidine 308 is the Proton acceptor of the active site.

It belongs to the class I-like SAM-binding methyltransferase superfamily. Cation-independent O-methyltransferase family. COMT subfamily.

Its pathway is secondary metabolite biosynthesis; terpenoid biosynthesis. O-methyltransferase; part of the gene cluster that mediates the biosynthesis of the phthalide-terpenoid hybrid 11'-O-desmethylfendlerol. Within the pathway, mfmE catalyzes the 7-O-methylation of the phthalide 5,7-dihydroxy-4-(hydroxymethyl)-6-methylphthalide to yield 5-hydroxy-4-(hydroxymethyl)-7-methoxy-6-methylphthalide. The biosynthesis of 11'-O-desmethylfendlerol begins with the NR-PKS mfmB that forms 3,5-dimethylorsellinic acid (DMOA), which is then transformed into the phthalide 5,7-dihydroxy-4-(hydroxymethyl)-6-methylphthalide by the cytochrome P450 monooxygenase mfmA and the hydrolase mfmC. Subsequently, the methyltransferase mfmE catalyzes 7-O-methylation to yield 5-hydroxy-4-(hydroxymethyl)-7-methoxy-6-methylphthalide, which undergoes C-3 hydroxylation by the cytochrome P450 monooxygenase mfmF. The resultant cyclopolic acid (2,5-dihydroxy-4-(hydroxymethyl)-7-methoxy-6-methylphthalide) is then farnesylated by the DMATS-type prenyltransferase mfmD to afford 5-O-farnesylcyclopolic acid. Finally, the Pyr4-family terpene cyclase mfmH cyclizes the farnesyl moiety of 5-O-farnesylcyclopolic acid into a drimane-like structure, thus completing the biosynthesis of 11'-O-desmethylfendlerol. This chain is O-methyltransferase mfmE, found in Annulohypoxylon moriforme (Filamentous fungus).